The primary structure comprises 384 residues: S-adenosylmethionine synthase (384 aa).

An ATP-binding site is contributed by histidine 15. Aspartate 17 contacts Mg(2+). Residue glutamate 43 coordinates K(+). Residues glutamate 56 and glutamine 99 each contribute to the L-methionine site. Positions 99-109 (QSPDINQGVDR) are flexible loop. ATP contacts are provided by residues 164 to 166 (DAK), 230 to 231 (RF), aspartate 239, 245 to 246 (RK), alanine 262, and lysine 266. Aspartate 239 lines the L-methionine pocket. Residue lysine 270 coordinates L-methionine.

Belongs to the AdoMet synthase family. As to quaternary structure, homotetramer; dimer of dimers. It depends on Mg(2+) as a cofactor. The cofactor is K(+).

It is found in the cytoplasm. The catalysed reaction is L-methionine + ATP + H2O = S-adenosyl-L-methionine + phosphate + diphosphate. Its pathway is amino-acid biosynthesis; S-adenosyl-L-methionine biosynthesis; S-adenosyl-L-methionine from L-methionine: step 1/1. Catalyzes the formation of S-adenosylmethionine (AdoMet) from methionine and ATP. The overall synthetic reaction is composed of two sequential steps, AdoMet formation and the subsequent tripolyphosphate hydrolysis which occurs prior to release of AdoMet from the enzyme. The chain is S-adenosylmethionine synthase from Yersinia enterocolitica serotype O:8 / biotype 1B (strain NCTC 13174 / 8081).